We begin with the raw amino-acid sequence, 117 residues long: Peptidyl-tRNA hydrolase (117 aa).

The protein belongs to the PTH2 family.

It is found in the cytoplasm. It catalyses the reaction an N-acyl-L-alpha-aminoacyl-tRNA + H2O = an N-acyl-L-amino acid + a tRNA + H(+). Functionally, the natural substrate for this enzyme may be peptidyl-tRNAs which drop off the ribosome during protein synthesis. In Thermoplasma acidophilum (strain ATCC 25905 / DSM 1728 / JCM 9062 / NBRC 15155 / AMRC-C165), this protein is Peptidyl-tRNA hydrolase.